Consider the following 410-residue polypeptide: Neurotensin receptor type 2 (410 aa).

Residues 1–32 (METSSPRPPRPSSNPGLSLDARLGVDTRLWAK) are Extracellular-facing. The helical transmembrane segment at 33 to 55 (VLFTALYALIWALGAAGNALSAH) threads the bilayer. Topologically, residues 56–64 (VVLKARAGR) are cytoplasmic. A helical transmembrane segment spans residues 65–87 (AGRLRHHVLSLALAGLLLLLVGV). Over 88–109 (PVELYSFVWFHYPWVFGDLGCR) the chain is Extracellular. Residues Cys-108 and Cys-194 are joined by a disulfide bond. Residues 110–131 (GYYFVHELCAYATVLSVAGLSA) traverse the membrane as a helical segment. Topologically, residues 132-154 (ERCLAVCQPLRARSLLTPRRTRW) are cytoplasmic. A helical transmembrane segment spans residues 155-176 (LVALSWAASLGLALPMAVIMGQ). The Extracellular portion of the chain corresponds to 177 to 217 (KHELETADGEPEPASRVCTVLVSRTALQVFIQVNVLVSFVL). The chain crosses the membrane as a helical span at residues 218–237 (PLALTAFLNGVTVSHLLALC). Topologically, residues 238 to 297 (SQVPSTSTPGSSTPSRLELLSEEGLLSFIVWKKTFIQGGQVSLVRHKDVRRIRSLQRSVQ) are cytoplasmic. A helical transmembrane segment spans residues 298 to 318 (VLRAIVVMYVICWLPYHARRL). Over 319–337 (MYCYVPDDAWTDPLYNFYH) the chain is Extracellular. A helical transmembrane segment spans residues 338 to 358 (YFYMVTNTLFYVSSAVTPLLY). Residues 359–410 (NAVSSSFRKLFLEAVSSLCGEHHPMKRLPPKPQSPTLMDTASGFGDPPETRT) lie on the Cytoplasmic side of the membrane. Cys-377 carries the S-palmitoyl cysteine lipid modification. Positions 381–410 (HPMKRLPPKPQSPTLMDTASGFGDPPETRT) are disordered.

Belongs to the G-protein coupled receptor 1 family. Neurotensin receptor subfamily. NTSR2 sub-subfamily. Expressed in prostate (at protein level).

The protein resides in the cell membrane. Its function is as follows. Receptor for the tridecapeptide neurotensin. It is associated with G proteins that activate a phosphatidylinositol-calcium second messenger system. The chain is Neurotensin receptor type 2 (NTSR2) from Homo sapiens (Human).